A 386-amino-acid polypeptide reads, in one-letter code: MHVTAITMEDTSFPYRLGTECAEEIVARLGERAASRYLVVCDTTVAALYGRDLVARLEKDAGPAVLLTHPAGEVHKRIGTVGDLAEQALAAGADRRSVVVALGGGITGNIAGLLASLLFRGITLVHVPTTVVAMLDSVLSLKQAVNASFGKNLVGTFYQPAEVLADTAMLRTLPARELRSGMGEVVKNALAIRPSMIERLAAELRPDARYEDAAMRWIIEESVAAKAQVTGADKHERRDGLVLEYGHTTGHAIEHAARGEVAHGAGVAIGMIVAAEVSRLLGHASGDLVGLHRELVAKAGLEGSVPALVDPADVKHWLTYDNKRGYMPCPPAATPMVLLSAPGEVLRSGPLPLVPVPLELLGRAVDALAAPAGQSAGAERLSPAPA.

Residues Asp42, 73–76 (EVHK), 105–109 (GITGN), 129–130 (TT), 140–142 (SLK), and 151–152 (KN) each bind NAD(+). Residue Lys142 is part of the active site. Glu184 lines the Co(2+) pocket. Glu244 is a catalytic residue. The Co(2+) site is built by His247 and His263.

Belongs to the sugar phosphate cyclases superfamily. DOI synthase family. The cofactor is NAD(+). Co(2+) is required as a cofactor.

The enzyme catalyses D-glucose 6-phosphate = 2-deoxy-L-scyllo-inosose + phosphate. It functions in the pathway metabolic intermediate biosynthesis; 2-deoxystreptamine biosynthesis; 2-deoxystreptamine from D-glucose 6-phosphate: step 1/4. Its pathway is antibiotic biosynthesis; paromomycin biosynthesis. In terms of biological role, catalyzes the intramolecular carbocycle formation from D-glucose-6-phosphate to 2-deoxy-scyllo-inosose (DOI). The polypeptide is 2-deoxy-scyllo-inosose synthase (parC) (Streptomyces paromomycinus (Streptomyces rimosus subsp. paromomycinus)).